The following is a 329-amino-acid chain: Endonuclease 8-like 2 (329 aa).

Residue Pro-2 is the Schiff-base intermediate with DNA of the active site. Glu-3 functions as the Proton donor in the catalytic mechanism. Lys-50 functions as the Proton donor; for beta-elimination activity in the catalytic mechanism. Lys-50 is subject to N6-acetyllysine. Position 68 is a phosphoserine (Ser-68). Residues 68–116 (SLLSEPLREGEQKDKARHHQEASDPSSWSPGGDSAVPSGDDGLQCLGGD) form a disordered region. Basic and acidic residues predominate over residues 73-89 (PLREGEQKDKARHHQEA). The segment covering 90–102 (SDPSSWSPGGDSA) has biased composition (low complexity). Lys-149 is subject to N6-acetyllysine. Position 227 (Asn-227) interacts with DNA. The segment at 280–316 (QIYQKEQCPAGHQVVRESLGPPGGFQRLTWWCPQCQP) adopts an FPG-type zinc-finger fold. Arg-306 serves as the catalytic Proton donor; for delta-elimination activity.

The protein belongs to the FPG family. In terms of assembly, binds EP300.

Its subcellular location is the nucleus. It catalyses the reaction 2'-deoxyribonucleotide-(2'-deoxyribose 5'-phosphate)-2'-deoxyribonucleotide-DNA = a 3'-end 2'-deoxyribonucleotide-(2,3-dehydro-2,3-deoxyribose 5'-phosphate)-DNA + a 5'-end 5'-phospho-2'-deoxyribonucleoside-DNA + H(+). Acetylation of Lys-50 leads to loss of DNA nicking activity. Functionally, involved in base excision repair of DNA damaged by oxidation or by mutagenic agents. Has DNA glycosylase activity towards 5-hydroxyuracil and other oxidized derivatives of cytosine with a preference for mismatched double-stranded DNA (DNA bubbles). Has low or no DNA glycosylase activity towards thymine glycol, 2-hydroxyadenine, hypoxanthine and 8-oxoguanine. Has AP (apurinic/apyrimidinic) lyase activity and introduces nicks in the DNA strand. Cleaves the DNA backbone by beta-delta elimination to generate a single-strand break at the site of the removed base with both 3'- and 5'-phosphates. The sequence is that of Endonuclease 8-like 2 (NEIL2) from Bos taurus (Bovine).